The chain runs to 161 residues: Phosphopantetheine adenylyltransferase (161 aa).

Residue Thr-9 participates in substrate binding. ATP is bound by residues 9-10 (TF) and His-17. 3 residues coordinate substrate: Lys-41, Leu-73, and Arg-87. ATP contacts are provided by residues 88–90 (GLR), Glu-98, and 123–129 (YQFISGT).

This sequence belongs to the bacterial CoaD family. Homohexamer. The cofactor is Mg(2+).

The protein localises to the cytoplasm. The enzyme catalyses (R)-4'-phosphopantetheine + ATP + H(+) = 3'-dephospho-CoA + diphosphate. It functions in the pathway cofactor biosynthesis; coenzyme A biosynthesis; CoA from (R)-pantothenate: step 4/5. Its function is as follows. Reversibly transfers an adenylyl group from ATP to 4'-phosphopantetheine, yielding dephospho-CoA (dPCoA) and pyrophosphate. The sequence is that of Phosphopantetheine adenylyltransferase from Janthinobacterium sp. (strain Marseille) (Minibacterium massiliensis).